A 276-amino-acid chain; its full sequence is Sec-independent protein translocase protein TatC (276 aa).

The disordered stretch occupies residues 1 to 29 (MVSLTSVPPYADATPDTRASSGPAPGRRK). 6 helical membrane-spanning segments follow: residues 49–69 (GGLV…LVLL), 103–123 (LFLA…AFVT), 136–156 (GFLG…WWVL), 187–207 (LVLA…LNLA), 221–241 (WAVL…DALT), and 242–262 (MVLV…VAVW).

Belongs to the TatC family. In terms of assembly, the Tat system comprises two distinct complexes: a TatABC complex, containing multiple copies of TatA, TatB and TatC subunits, and a separate TatA complex, containing only TatA subunits. Substrates initially bind to the TatABC complex, which probably triggers association of the separate TatA complex to form the active translocon.

The protein localises to the cell membrane. Part of the twin-arginine translocation (Tat) system that transports large folded proteins containing a characteristic twin-arginine motif in their signal peptide across membranes. Together with TatB, TatC is part of a receptor directly interacting with Tat signal peptides. In Xylanimonas cellulosilytica (strain DSM 15894 / JCM 12276 / CECT 5975 / KCTC 9989 / LMG 20990 / NBRC 107835 / XIL07), this protein is Sec-independent protein translocase protein TatC.